The following is a 194-amino-acid chain: Small ribosomal subunit protein uS4c (194 aa).

Residues 82–143 (MRLDNILFRL…KQRSKALIQN (62 aa)) enclose the S4 RNA-binding domain.

This sequence belongs to the universal ribosomal protein uS4 family. Part of the 30S ribosomal subunit. Contacts protein S5. The interaction surface between S4 and S5 is involved in control of translational fidelity.

It localises to the plastid. The protein localises to the chloroplast. One of the primary rRNA binding proteins, it binds directly to 16S rRNA where it nucleates assembly of the body of the 30S subunit. Functionally, with S5 and S12 plays an important role in translational accuracy. This is Small ribosomal subunit protein uS4c (rps4) from Sisyrinchium striatum (Satin flower).